A 387-amino-acid polypeptide reads, in one-letter code: Cytochrome b (387 aa).

8 helical membrane passes run 32-52 (FGFF…LLAM), 76-98 (WLLR…VHML), 113-133 (LWVS…LGYV), 179-199 (FFSL…LHII), 225-245 (FTIK…AFVF), 290-310 (LGVL…FLTI), 325-345 (LFWS…QPAA), and 353-373 (LYST…IYMV). Residues His-82 and His-96 each coordinate heme b. Residues His-183 and His-197 each contribute to the heme b site.

The protein belongs to the cytochrome b family. In terms of assembly, the main subunits of complex b-c1 are: cytochrome b, cytochrome c1 and the Rieske protein. Heme b is required as a cofactor.

It is found in the mitochondrion inner membrane. Its function is as follows. Component of the ubiquinol-cytochrome c reductase complex (complex III or cytochrome b-c1 complex) that is part of the mitochondrial respiratory chain. The b-c1 complex mediates electron transfer from ubiquinol to cytochrome c. Contributes to the generation of a proton gradient across the mitochondrial membrane that is then used for ATP synthesis. The sequence is that of Cytochrome b (cytB) from Dictyostelium citrinum (Slime mold).